We begin with the raw amino-acid sequence, 362 residues long: Vignain (362 aa).

The first 20 residues, 1–20 (MATKKLLWVVLSFSLVLGVA), serve as a signal peptide directing secretion. A propeptide spans 21-131 (NSFDFHDKDL…YEKVVSVPPS (111 aa)) (activation peptide). Intrachain disulfides connect cysteine 149–cysteine 191, cysteine 183–cysteine 224, and cysteine 282–cysteine 334. Cysteine 152 is an active-site residue. Catalysis depends on residues histidine 288 and asparagine 309. N-linked (GlcNAc...) asparagine glycans are attached at residues asparagine 326 and asparagine 346. The short motif at 359-362 (KDEL) is the Prevents secretion from ER element.

This sequence belongs to the peptidase C1 family. As to quaternary structure, monomer.

Its subcellular location is the endoplasmic reticulum lumen. Functionally, thought to be involved in the hydrolysis of stored seed proteins. This chain is Vignain, found in Phaseolus vulgaris (Kidney bean).